The sequence spans 78 residues: Translational regulator CsrA (78 aa).

It belongs to the CsrA/RsmA family. In terms of assembly, homodimer; the beta-strands of each monomer intercalate to form a hydrophobic core, while the alpha-helices form wings that extend away from the core.

The protein localises to the cytoplasm. Functionally, a translational regulator that binds mRNA to regulate translation initiation and/or mRNA stability. Usually binds in the 5'-UTR at or near the Shine-Dalgarno sequence preventing ribosome-binding, thus repressing translation. Its main target seems to be the major flagellin gene, while its function is anatagonized by FliW. In Caldicellulosiruptor bescii (strain ATCC BAA-1888 / DSM 6725 / KCTC 15123 / Z-1320) (Anaerocellum thermophilum), this protein is Translational regulator CsrA.